The sequence spans 146 residues: Large ribosomal subunit protein uL15 (146 aa).

The interval methionine 1–glutamate 51 is disordered. Composition is skewed to gly residues over residues arginine 21–serine 31 and serine 42–glutamate 51.

The protein belongs to the universal ribosomal protein uL15 family. As to quaternary structure, part of the 50S ribosomal subunit.

Binds to the 23S rRNA. This is Large ribosomal subunit protein uL15 from Anoxybacillus flavithermus (strain DSM 21510 / WK1).